Here is a 470-residue protein sequence, read N- to C-terminus: Uronate isomerase (470 aa).

This sequence belongs to the metallo-dependent hydrolases superfamily. Uronate isomerase family.

The enzyme catalyses D-glucuronate = D-fructuronate. The catalysed reaction is aldehydo-D-galacturonate = keto-D-tagaturonate. It functions in the pathway carbohydrate metabolism; pentose and glucuronate interconversion. The sequence is that of Uronate isomerase from Salmonella newport (strain SL254).